Reading from the N-terminus, the 417-residue chain is Probable sugar-binding periplasmic protein (417 aa).

An N-terminal signal peptide occupies residues 1–21; sequence MLRKLLIGTALATSFAFSAHA.

It belongs to the bacterial solute-binding protein 1 family.

It is found in the periplasm. Part of a binding-protein-dependent transport system for a sugar. In Mesorhizobium japonicum (strain LMG 29417 / CECT 9101 / MAFF 303099) (Mesorhizobium loti (strain MAFF 303099)), this protein is Probable sugar-binding periplasmic protein.